The sequence spans 427 residues: Kallistatin (427 aa).

An N-terminal signal peptide occupies residues 1–20; the sequence is MHLIDYLLLLLVGLLALSHG. 4 N-linked (GlcNAc...) asparagine glycosylation sites follow: N33, N108, N157, and N238.

This sequence belongs to the serpin family. In terms of assembly, monomer and some homodimers.

It is found in the secreted. Functionally, inhibits human amidolytic and kininogenase activities of tissue kallikrein. This chain is Kallistatin (SERPINA4), found in Pongo abelii (Sumatran orangutan).